The sequence spans 73 residues: UPF0235 protein PERMA_1406 (73 aa).

It belongs to the UPF0235 family.

The protein is UPF0235 protein PERMA_1406 of Persephonella marina (strain DSM 14350 / EX-H1).